Consider the following 535-residue polypeptide: Secreted lipase 5 (535 aa).

Residues 1-17 (MHLKSLLLAALPLLLEA) form the signal peptide. 2 N-linked (GlcNAc...) asparagine glycosylation sites follow: N32 and N119. The active-site Acyl-ester intermediate is S241. Residues N282, N341, N347, and N432 are each glycosylated (N-linked (GlcNAc...) asparagine).

This sequence belongs to the type-B carboxylesterase/lipase family.

The protein resides in the secreted. The enzyme catalyses a carboxylic ester + H2O = an alcohol + a carboxylate + H(+). Functionally, secreted lipase involved in plant virulence. Has a substrate preference for p-nitrophenyl esters with a carbon chain length of C8 (p-nitrophenyl caprylate). In Gibberella zeae (strain ATCC MYA-4620 / CBS 123657 / FGSC 9075 / NRRL 31084 / PH-1) (Wheat head blight fungus), this protein is Secreted lipase 5.